The sequence spans 243 residues: Benzil reductase ((S)-benzoin forming) (243 aa).

Ile6, Asn80, Tyr147, Lys151, and Thr184 together coordinate NADP(+). Tyr147 acts as the Proton acceptor in catalysis.

It belongs to the short-chain dehydrogenases/reductases (SDR) family.

The protein resides in the cytoplasm. The enzyme catalyses (S)-benzoin + NADP(+) = benzil + NADPH + H(+). Functionally, reduces benzil stereospecifically to (S)-benzoin. The protein is Benzil reductase ((S)-benzoin forming) (yueD) of Bacillus subtilis (strain 168).